Consider the following 647-residue polypeptide: DNA ligase (647 aa).

NAD(+) contacts are provided by residues Asp30–Asp34, Ser79–Met80, and Glu105. The active-site N6-AMP-lysine intermediate is the Lys107. Arg128, Glu162, and Lys301 together coordinate NAD(+). Zn(2+) contacts are provided by Cys395, Cys398, Cys411, and Cys416. The BRCT domain occupies Lys570–Glu647.

Belongs to the NAD-dependent DNA ligase family. LigA subfamily. It depends on Mg(2+) as a cofactor. Mn(2+) is required as a cofactor.

The enzyme catalyses NAD(+) + (deoxyribonucleotide)n-3'-hydroxyl + 5'-phospho-(deoxyribonucleotide)m = (deoxyribonucleotide)n+m + AMP + beta-nicotinamide D-nucleotide.. In terms of biological role, DNA ligase that catalyzes the formation of phosphodiester linkages between 5'-phosphoryl and 3'-hydroxyl groups in double-stranded DNA using NAD as a coenzyme and as the energy source for the reaction. It is essential for DNA replication and repair of damaged DNA. This chain is DNA ligase, found in Campylobacter jejuni (strain RM1221).